The chain runs to 158 residues: Putative pre-16S rRNA nuclease (158 aa).

It belongs to the YqgF nuclease family.

It is found in the cytoplasm. Its function is as follows. Could be a nuclease involved in processing of the 5'-end of pre-16S rRNA. The protein is Putative pre-16S rRNA nuclease of Paracoccus denitrificans (strain Pd 1222).